The following is a 482-amino-acid chain: PHD finger protein At3g20280 (482 aa).

The PHD-type zinc-finger motif lies at 45 to 97 (AMACQICEVTINEMDTLLICDACEKAYHLKCLQGNNMKGVPKSEWHCSRCVQA). Disordered stretches follow at residues 188–210 (TNIG…APVS) and 314–482 (SSNS…ENAA). Positions 314 to 324 (SSNSQQAVSHS) are enriched in low complexity. Polar residues-rich tracts occupy residues 377-386 (ACQNHPTASP) and 393-428 (QDST…NYDS). A compositionally biased stretch (basic and acidic residues) spans 447-482 (DSEKGKGLNGLDDRHQEQPSEPEFYKSDSVKEENAA).

The polypeptide is PHD finger protein At3g20280 (Arabidopsis thaliana (Mouse-ear cress)).